The sequence spans 192 residues: Putative molybdenum cofactor guanylyltransferase (192 aa).

Residues 8–10 (LAG), K21, D67, and D101 each bind GTP. D101 provides a ligand contact to Mg(2+).

Belongs to the MobA family. In terms of assembly, monomer. The cofactor is Mg(2+).

It localises to the cytoplasm. It catalyses the reaction Mo-molybdopterin + GTP + H(+) = Mo-molybdopterin guanine dinucleotide + diphosphate. Functionally, transfers a GMP moiety from GTP to Mo-molybdopterin (Mo-MPT) cofactor (Moco or molybdenum cofactor) to form Mo-molybdopterin guanine dinucleotide (Mo-MGD) cofactor. This chain is Putative molybdenum cofactor guanylyltransferase, found in Neisseria meningitidis serogroup B (strain ATCC BAA-335 / MC58).